The following is a 495-amino-acid chain: Histidine--tRNA ligase (495 aa).

This sequence belongs to the class-II aminoacyl-tRNA synthetase family. In terms of assembly, homodimer.

It is found in the cytoplasm. It carries out the reaction tRNA(His) + L-histidine + ATP = L-histidyl-tRNA(His) + AMP + diphosphate + H(+). This chain is Histidine--tRNA ligase, found in Bartonella henselae (strain ATCC 49882 / DSM 28221 / CCUG 30454 / Houston 1) (Rochalimaea henselae).